The sequence spans 120 residues: U-scoloptoxin(16)-Er2a (120 aa).

Residues M1–A26 form the signal peptide.

It belongs to the scoloptoxin-16 family. Post-translationally, contains 4 disulfide bonds. In terms of tissue distribution, expressed by the venom gland.

The protein localises to the secreted. This Ethmostigmus rubripes (Giant centipede) protein is U-scoloptoxin(16)-Er2a.